Consider the following 30-residue polypeptide: Cliotide T19 (30 aa).

The segment at residues 1 to 30 is a cross-link (cyclopeptide (Gly-Asn)); sequence GSVIKCGESCLLGKCYTPGCTCSRPICKKN. 3 disulfide bridges follow: Cys6-Cys20, Cys10-Cys22, and Cys15-Cys27.

Contains 3 disulfide bonds. Post-translationally, this is a cyclic peptide. Expressed in root nodules but not in seed.

Probably participates in a plant defense mechanism. Active against Gram-negative bacterium E.coli ATCC 700926 (MIC=0.6 uM) under low-salt conditions. Not active against Gram-positive bacterium S.aureus ATCC 12600 up to a concentration of 100 uM under low-salt conditions. Exhibits immunomodulatory activity but no cytotoxicity in vitro. This is Cliotide T19 from Clitoria ternatea (Butterfly pea).